The primary structure comprises 538 residues: Pentachlorophenol 4-monooxygenase (538 aa).

FAD-binding positions include 16–45 (AVLIVGGGPTGLIAANELLRRGVSCRMIDR) and 288–298 (YRKGNVFLAGD).

This sequence belongs to the PheA/TfdB FAD monooxygenase family. As to quaternary structure, homodimer. Requires FAD as cofactor.

It catalyses the reaction pentachlorophenol + NADPH + O2 + H(+) = 2,3,5,6-tetrachloro-1,4-benzoquinone + chloride + NADP(+) + H2O. It carries out the reaction 2,3,5,6-tetrachlorophenol + NADPH + O2 = 2,3,5,6-tetrachlorohydroquinone + NADP(+) + H2O. It participates in xenobiotic degradation; pentachlorophenol degradation. In terms of biological role, dechlorination of pentachlorophenol to tetrachlorobenzoquinone. Also removes hydrogen and nitro, amino, and cyano groups from benzene ring at the para position in relation to the hydroxyl of phenol. This chain is Pentachlorophenol 4-monooxygenase (pcpB), found in Sphingobium chlorophenolicum.